The chain runs to 107 residues: Flagellar hook-basal body complex protein FliE (107 aa).

It belongs to the FliE family.

It is found in the bacterial flagellum basal body. The sequence is that of Flagellar hook-basal body complex protein FliE from Sodalis glossinidius (strain morsitans).